The chain runs to 229 residues: Urease accessory protein UreF (229 aa).

Belongs to the UreF family. In terms of assembly, ureD, UreF and UreG form a complex that acts as a GTP-hydrolysis-dependent molecular chaperone, activating the urease apoprotein by helping to assemble the nickel containing metallocenter of UreC. The UreE protein probably delivers the nickel.

The protein localises to the cytoplasm. Functionally, required for maturation of urease via the functional incorporation of the urease nickel metallocenter. This chain is Urease accessory protein UreF, found in Staphylococcus saprophyticus subsp. saprophyticus (strain ATCC 15305 / DSM 20229 / NCIMB 8711 / NCTC 7292 / S-41).